We begin with the raw amino-acid sequence, 381 residues long: Chorismate synthase (381 aa).

2 residues coordinate NADP(+): arginine 39 and arginine 45. FMN is bound by residues arginine 127–serine 129, glutamine 248–serine 249, glycine 293, lysine 308–threonine 312, and arginine 334.

This sequence belongs to the chorismate synthase family. Homotetramer. FMNH2 serves as cofactor.

It carries out the reaction 5-O-(1-carboxyvinyl)-3-phosphoshikimate = chorismate + phosphate. The protein operates within metabolic intermediate biosynthesis; chorismate biosynthesis; chorismate from D-erythrose 4-phosphate and phosphoenolpyruvate: step 7/7. In terms of biological role, catalyzes the anti-1,4-elimination of the C-3 phosphate and the C-6 proR hydrogen from 5-enolpyruvylshikimate-3-phosphate (EPSP) to yield chorismate, which is the branch point compound that serves as the starting substrate for the three terminal pathways of aromatic amino acid biosynthesis. This reaction introduces a second double bond into the aromatic ring system. The polypeptide is Chorismate synthase (Caldicellulosiruptor saccharolyticus (strain ATCC 43494 / DSM 8903 / Tp8T 6331)).